The chain runs to 454 residues: GTPase Obg (454 aa).

An Obg domain is found at 2 to 159 (SDFVDEAVLH…VDIRLELKTI (158 aa)). Residues 60–87 (YQRRPHRKAENGAPGQGSNRSGASGADL) form a disordered region. An OBG-type G domain is found at 160-335 (ADVGLVGFPS…LAYALGEQVA (176 aa)). GTP is bound by residues 166 to 173 (GFPSAGKS), 191 to 195 (FTTLV), 212 to 215 (DVPG), 287 to 290 (NKID), and 316 to 318 (SAA). Residues serine 173 and threonine 193 each contribute to the Mg(2+) site. The OCT domain occupies 353–435 (PREIGEIPFQ…DNPVVFDWDP (83 aa)).

Belongs to the TRAFAC class OBG-HflX-like GTPase superfamily. OBG GTPase family. As to quaternary structure, monomer. Mg(2+) serves as cofactor.

The protein resides in the cytoplasm. Functionally, an essential GTPase which binds GTP, GDP and possibly (p)ppGpp with moderate affinity, with high nucleotide exchange rates and a fairly low GTP hydrolysis rate. Plays a role in control of the cell cycle, stress response, ribosome biogenesis and in those bacteria that undergo differentiation, in morphogenesis control. This chain is GTPase Obg, found in Thermobifida fusca (strain YX).